The following is a 1101-amino-acid chain: Helicase POLQ-like (1101 aa).

The disordered stretch occupies residues Asp212 to Arg261. Residues Leu213–Ser225 are compositionally biased toward basic and acidic residues. A compositionally biased stretch (polar residues) spans Glu241–Asp258. A Helicase ATP-binding domain is found at Leu346–Gln518. Leu359 to Thr366 contacts ATP. A DEAH box motif is present at residues Asp463–His466. The Helicase C-terminal domain occupies His566–Phe758.

Belongs to the helicase family. SKI2 subfamily. In terms of assembly, homodimer. Interacts with POLN. Interacts with RAD51B and RAD51C; promoting association with the BCDX2 complex. Interacts with the replication protein A (RPA/RP-A) complex. Interacts with RAD51; stimulating HELQ DNA helicase activity and ability to unwing DNA.

Its subcellular location is the nucleus. It localises to the chromosome. The catalysed reaction is Couples ATP hydrolysis with the unwinding of duplex DNA by translocating in the 3'-5' direction.. It catalyses the reaction ATP + H2O = ADP + phosphate + H(+). ATPase activity is strongly stimulated by single-stranded DNA. Presence of ATP and Mg cofactor are required for helicase activity allowing to unwind duplex oligonucleotides up to 60-70-mer. This helicase activity is stimulated by replication protein A (RPA/RP-A) complex that binds to unwound regions and inhibits re-annealing. Its function is as follows. Single-stranded 3'-5' DNA helicase that plays a key role in homology-driven double-strand break (DSB) repair. Involved in different DSB repair mechanisms that are guided by annealing of extensive stretches of complementary bases at break ends, such as microhomology-mediated end-joining (MMEJ), single-strand annealing (SSA) or synthesis-dependent strand annealing (SDSA). Possesses both DNA unwinding and annealing activities. Forms a complex with RAD51, stimulating HELQ DNA helicase activity and ability to unwing DNA. Efficiently unwinds substrates containing 3' overhangs or a D-loop. In contrast, interaction with the replication protein A (RPA/RP-A) complex inhibits DNA unwinding by HELQ but strongly stimulates DNA strand annealing. Triggers displacement of RPA from single-stranded DNA to facilitate annealing of complementary sequences. In Homo sapiens (Human), this protein is Helicase POLQ-like.